A 686-amino-acid polypeptide reads, in one-letter code: Methionine--tRNA ligase (686 aa).

The 'HIGH' region signature appears at 15 to 25 (PYANGSIHLGH). Cysteine 146, cysteine 149, cysteine 159, and cysteine 162 together coordinate Zn(2+). The 'KMSKS' region signature appears at 332-336 (KMSKS). Lysine 335 contributes to the ATP binding site. In terms of domain architecture, tRNA-binding spans 585-686 (AFEAVDMRIA…EGAQPGMRVM (102 aa)).

The protein belongs to the class-I aminoacyl-tRNA synthetase family. MetG type 1 subfamily. Homodimer. It depends on Zn(2+) as a cofactor.

Its subcellular location is the cytoplasm. The enzyme catalyses tRNA(Met) + L-methionine + ATP = L-methionyl-tRNA(Met) + AMP + diphosphate. In terms of biological role, is required not only for elongation of protein synthesis but also for the initiation of all mRNA translation through initiator tRNA(fMet) aminoacylation. The protein is Methionine--tRNA ligase of Aliivibrio fischeri (strain MJ11) (Vibrio fischeri).